The following is a 435-amino-acid chain: MDWLQLFFLHPLSFYQGAAFPFALLFNYLCILDTFSTRARYLFLLAGGGVLAFAAMGPYSLLIFIPALCAVALVSFLSPQEVHRLTFFFQMGWQTLCHLGLHYTEYYLGEPPPVRFYITLSSLMLLTQRVTSLSLDICEGKVEAPRRGIRSKSSFSEHLWDALPHFSYLLFFPALLGGSLCSFRRFQACVQRSSSLYPSISFRALTWRGLQILGLECLKVALRSAVSAGAGLDDCQRLECIYLMWSTAWLFKLTYYSHWILDDSLLHAAGFGAEAGQGPGEEGYVPDVDIWTLETTHRISLFARQWNRSTALWLRRLVFRKSRRWPLLQTFAFSAWWHGLHPGQVFGFLCWSVMVKADYLIHTFANVCIRSWPLRLLYRALTWAHTQLIIAYIMLAVEGRSLSSLCQLCCSYNSLFPVMYGLLLFLLAERKDKRN.

Topologically, residues 1–5 (MDWLQ) are lumenal. The chain crosses the membrane as a helical span at residues 6–26 (LFFLHPLSFYQGAAFPFALLF). At 27–40 (NYLCILDTFSTRAR) the chain is on the cytoplasmic side. A helical transmembrane segment spans residues 41-56 (YLFLLAGGGVLAFAAM). The Lumenal portion of the chain corresponds to 57–59 (GPY). The helical transmembrane segment at 60–76 (SLLIFIPALCAVALVSF) threads the bilayer. At 77–82 (LSPQEV) the chain is on the cytoplasmic side. The chain crosses the membrane as a helical span at residues 83 to 101 (HRLTFFFQMGWQTLCHLGL). Topologically, residues 102–120 (HYTEYYLGEPPPVRFYITL) are lumenal. Residues 121-136 (SSLMLLTQRVTSLSLD) form a helical membrane-spanning segment. At 137–206 (ICEGKVEAPR…YPSISFRALT (70 aa)) the chain is on the cytoplasmic side. The helical transmembrane segment at 207 to 227 (WRGLQILGLECLKVALRSAVS) threads the bilayer. At 228–240 (AGAGLDDCQRLEC) the chain is on the lumenal side. Residues 241–261 (IYLMWSTAWLFKLTYYSHWIL) form a helical membrane-spanning segment. Residues 262 to 324 (DDSLLHAAGF…RRLVFRKSRR (63 aa)) are Cytoplasmic-facing. Active-site residues include N307 and H338. Residues 325–338 (WPLLQTFAFSAWWH) form a helical membrane-spanning segment. Topologically, residues 339–340 (GL) are lumenal. A helical membrane pass occupies residues 341–357 (HPGQVFGFLCWSVMVKA). Residues 358–376 (DYLIHTFANVCIRSWPLRL) are Cytoplasmic-facing. The chain crosses the membrane as a helical span at residues 377–397 (LYRALTWAHTQLIIAYIMLAV). Topologically, residues 398–407 (EGRSLSSLCQ) are lumenal. A helical transmembrane segment spans residues 408 to 428 (LCCSYNSLFPVMYGLLLFLLA). Topologically, residues 429–435 (ERKDKRN) are cytoplasmic.

The protein belongs to the membrane-bound acyltransferase family. As to quaternary structure, monomer. Not glycosylated. Highly expressed in stomach and pancreas. Lower expression in small intestine and colon. Very low expression in testis.

Its subcellular location is the endoplasmic reticulum membrane. It carries out the reaction octanoyl-CoA + L-seryl-[protein] = O-octanoyl-L-seryl-[protein] + CoA. It catalyses the reaction hexanoyl-CoA + L-seryl-[protein] = O-hexanoyl-L-seryl-[protein] + CoA. The enzyme catalyses decanoyl-CoA + L-seryl-[protein] = O-decanoyl-L-seryl-[protein] + CoA. The catalysed reaction is L-seryl-[protein] + acetyl-CoA = O-acetyl-L-seryl-[protein] + CoA. It carries out the reaction L-seryl-[protein] + butanoyl-CoA = O-butanoyl-L-seryl-[protein] + CoA. It catalyses the reaction pentanoyl-CoA + L-seryl-[protein] = O-pentanoyl-L-seryl-[protein] + CoA. The enzyme catalyses heptanoyl-CoA + L-seryl-[protein] = O-heptanoyl-L-seryl-[protein] + CoA. The catalysed reaction is nonanoyl-CoA + L-seryl-[protein] = O-nonanoyl-L-seryl-[protein] + CoA. It carries out the reaction L-seryl-[protein] + dodecanoyl-CoA = O-dodecanoyl-L-seryl-[protein] + CoA. It catalyses the reaction L-seryl-[protein] + tetradecanoyl-CoA = O-tetradecanoyl-L-seryl-[protein] + CoA. The enzyme catalyses a fatty acyl-CoA + L-seryl-[protein] = O-fatty acyl-L-seryl-[protein] + CoA. With respect to regulation, inhibited by 1-[2-cyano-3,12-dioxooleana-1,9(11)- dien-28-oyl]ethylamide (CDDO-EA) with an IC(50) of 60 uM. Inhibited by Fe3+ and Cu2+ and the O-acyltransferase activity is completely blocked over 5 mM Fe3+ and 0.5 mM Cu2+. Its function is as follows. Catalyzes ghrelin acylation at 'Ser-3' using preferentially octanoyl-CoA, hexanoyl-CoA and decanoyl-CoA as acyl-CoA donors leading to ghrelin activity. In vitro also uses acyl-CoA donors of different lengths from short-chain (C2) to long-chain fatty acids (C16) knowing that acyl-CoA donors from butanoyl-CoA (C4) to dodecanoyl-CoA (C12) are more efficient compared to longer acyl-CoA donors, such as myristoyl-CoA (C14) and palmitoyl-CoA (C16) that are not efficient. Inactive octanoyltransferase activity. In Mus musculus (Mouse), this protein is Membrane-bound ghrelin O-acyltransferase MBOAT4.